An 88-amino-acid chain; its full sequence is Putative defensin-like protein 264 (88 aa).

Residues 1–26 (MEKMVLRKVVLLAILLSLSCLWVAKA) form the signal peptide. 3 cysteine pairs are disulfide-bonded: Cys47–Cys65, Cys53–Cys70, and Cys57–Cys72.

This sequence belongs to the DEFL family.

The protein resides in the secreted. This Arabidopsis thaliana (Mouse-ear cress) protein is Putative defensin-like protein 264.